The following is a 372-amino-acid chain: Protein phosphatase Mn(2+)-dependent 1K (372 aa).

Residues 1–29 (MSTAALLTLVRSGGNQVRRRVLLRARGLQ) constitute a mitochondrion transit peptide. The tract at residues 46–61 (KWSRFDPDGSGRPATW) is critical for association with the BCKDH complex. The PPM-type phosphatase domain occupies 94–346 (NVGSASQIGK…DNTTAVVVPF (253 aa)). Aspartate 127 and glycine 128 together coordinate Mn(2+). Serine 248 bears the Phosphoserine mark. 2 residues coordinate Mn(2+): aspartate 298 and aspartate 337.

Belongs to the PP2C family. Monomer. Interacts with E1 and E2 components of the branched-chain alpha-ketoacid dehydrogenase (BCKDH) complex; this interaction requires colocalization in mitochondria. Interacts with BCKDHA but not with BCKDHB of the E1 component. Interacts with the 24-meric E2 core composed of DBT monomers with a 24:1 stoichiometry; the N-terminal region (residues 49-61) of PPM1K and C-terminal linker of the lipoyl domain of DBT (residues 145-160) are critical for this interaction, whereas the lipoyl prosthetic group is dispensable. Competes with BCKDK for binding to the E2 core; this interaction is modulated by branched-chain alpha-keto acids. At steady state, BCKDH holoenzyme preferentially binds BCKDK and BCKDHA is phosphorylated. In response to high levels of branched-chain alpha-keto acids, the inhibitory BCKDK is replaced by activating PPM1K leading to BCKDHA dephosphorylation and BCAA degradation. The cofactor is Mn(2+).

The protein resides in the mitochondrion matrix. The catalysed reaction is O-phospho-L-seryl-[3-methyl-2-oxobutanoate dehydrogenase] + H2O = L-seryl-[3-methyl-2-oxobutanoate dehydrogenase] + phosphate. The enzyme catalyses O-phospho-L-seryl-[protein] + H2O = L-seryl-[protein] + phosphate. It participates in protein modification. In terms of biological role, serine/threonine-protein phosphatase component of macronutrients metabolism. Forms a functional kinase and phosphatase pair with BCKDK, serving as a metabolic regulatory node that coordinates branched-chain amino acids (BCAAs) with glucose and lipid metabolism via two distinct phosphoprotein targets: mitochondrial BCKDHA subunit of the branched-chain alpha-ketoacid dehydrogenase (BCKDH) complex and cytosolic ACLY, a lipogenic enzyme of Krebs cycle. At high levels of branched-chain ketoacids, dephosphorylates and activates mitochondrial BCKDH complex, a multisubunit complex consisting of three multimeric components each involved in different steps of BCAA catabolism: E1 composed of BCKDHA and BCKDHB, E2 core composed of DBT monomers, and E3 composed of DLD monomers. Tightly associates with the E2 component of BCKDH complex and dephosphorylates BCKDHA on Ser-347. Regulates the reversible phosphorylation of ACLY in response to changes in cellular carbohydrate abundance such as occurs during fasting to feeding metabolic transition. At fasting state, appears to dephosphorylate ACLY on Ser-455 and inactivate it. Refeeding stimulates MLXIPL/ChREBP transcription factor, leading to increased BCKDK to PPM1K expression ratio, phosphorylation and activation of ACLY that ultimately results in the generation of malonyl-CoA and oxaloacetate immediate substrates of de novo lipogenesis and gluconeogenesis, respectively. Recognizes phosphosites having SxS or RxxS motifs and strictly depends on Mn(2+) ions for the phosphatase activity. Regulates Ca(2+)-induced opening of mitochondrial transition pore and apoptotic cell death. This chain is Protein phosphatase Mn(2+)-dependent 1K (PPM1K), found in Bos taurus (Bovine).